Consider the following 326-residue polypeptide: Phospho-N-acetylmuramoyl-pentapeptide-transferase (326 aa).

Transmembrane regions (helical) follow at residues 3–23 (ISIS…PAFI), 51–71 (TMGG…VALF), 79–99 (VGMI…DDFL), 115–135 (LALQ…GGDM), 138–158 (VFGY…FWLV), 169–189 (GIDG…GVIA), 195–215 (MDIL…FVFN), 221–243 (VFMG…MALH), and 306–326 (FFFW…LYLM).

It belongs to the glycosyltransferase 4 family. MraY subfamily. It depends on Mg(2+) as a cofactor.

It is found in the cell membrane. The enzyme catalyses UDP-N-acetyl-alpha-D-muramoyl-L-alanyl-gamma-D-glutamyl-L-lysyl-D-alanyl-D-alanine + di-trans,octa-cis-undecaprenyl phosphate = Mur2Ac(oyl-L-Ala-gamma-D-Glu-L-Lys-D-Ala-D-Ala)-di-trans,octa-cis-undecaprenyl diphosphate + UMP. It participates in cell wall biogenesis; peptidoglycan biosynthesis. Its function is as follows. Catalyzes the initial step of the lipid cycle reactions in the biosynthesis of the cell wall peptidoglycan: transfers peptidoglycan precursor phospho-MurNAc-pentapeptide from UDP-MurNAc-pentapeptide onto the lipid carrier undecaprenyl phosphate, yielding undecaprenyl-pyrophosphoryl-MurNAc-pentapeptide, known as lipid I. The sequence is that of Phospho-N-acetylmuramoyl-pentapeptide-transferase from Streptococcus pneumoniae (strain Taiwan19F-14).